A 284-amino-acid chain; its full sequence is Bifunctional protein FolD (284 aa).

Residue G166 to S168 participates in NADP(+) binding.

It belongs to the tetrahydrofolate dehydrogenase/cyclohydrolase family. In terms of assembly, homodimer.

It catalyses the reaction (6R)-5,10-methylene-5,6,7,8-tetrahydrofolate + NADP(+) = (6R)-5,10-methenyltetrahydrofolate + NADPH. The enzyme catalyses (6R)-5,10-methenyltetrahydrofolate + H2O = (6R)-10-formyltetrahydrofolate + H(+). The protein operates within one-carbon metabolism; tetrahydrofolate interconversion. Its function is as follows. Catalyzes the oxidation of 5,10-methylenetetrahydrofolate to 5,10-methenyltetrahydrofolate and then the hydrolysis of 5,10-methenyltetrahydrofolate to 10-formyltetrahydrofolate. This is Bifunctional protein FolD from Legionella pneumophila (strain Paris).